A 157-amino-acid chain; its full sequence is uncharacterized protein (157 aa).

Residues 9-154 (LLINYKTLDE…ETNLNAVTNE (146 aa)) form the N-acetyltransferase domain.

This is an uncharacterized protein from Bacillus cereus (strain ATCC 14579 / DSM 31 / CCUG 7414 / JCM 2152 / NBRC 15305 / NCIMB 9373 / NCTC 2599 / NRRL B-3711).